A 222-amino-acid polypeptide reads, in one-letter code: Cysteine protease inhibitor 1 (222 aa).

The N-terminal stretch at 1 to 26 (MKSINILSFLLLSSTLSLVAFARSFT) is a signal peptide. A propeptide spanning residues 27–42 (SENPIVLPTTCHDDDN) is cleaved from the precursor. Residues 29–34 (NPIVLP) carry the Vacuolar targeting signal motif. 2 disulfide bridges follow: cysteine 84-cysteine 136 and cysteine 185-cysteine 191.

The protein belongs to the protease inhibitor I3 (leguminous Kunitz-type inhibitor) family. Tubers, leaves.

It is found in the vacuole. Functionally, potent inhibitor of cathepsin l (cysteine protease). Does not inhibit trypsin or chymotrypsin (serine proteases). May protect the plant by inhibiting proteases of invading organisms. This chain is Cysteine protease inhibitor 1, found in Solanum tuberosum (Potato).